The primary structure comprises 660 residues: Polycomb protein SCMH1 (660 aa).

MBT repeat units follow at residues 28 to 126 (FTWD…LQPP) and 134 to 235 (SSWP…LQPP). Positions 233–345 (QPPGTKVVIP…EPDTSTVPQD (113 aa)) are disordered. Basic residues-rich tracts occupy residues 273–284 (RGRKPGKKRGRT) and 305–320 (FPKK…RKPR). A compositionally biased stretch (low complexity) spans 330–343 (PTTSTPEPDTSTVP). The SAM domain maps to 593 to 658 (WTVEDVMQFV…SYHIDRLKQG (66 aa)).

Belongs to the SCM family. Interacts with the SAM domain of PHC1 via its SAM domain in vitro. Associates with a PRC1-like complex. As to expression, strongly expressed in heart, muscle and pancreas. Weakly expressed in brain, placenta, lung, liver and kidney.

It is found in the nucleus. Its function is as follows. Associates with Polycomb group (PcG) multiprotein complexes; the complex class is required to maintain the transcriptionally repressive state of some genes. The chain is Polycomb protein SCMH1 from Homo sapiens (Human).